Here is a 243-residue protein sequence, read N- to C-terminus: Carboxy-S-adenosyl-L-methionine synthase (243 aa).

S-adenosyl-L-methionine is bound by residues Tyr40, 65 to 67 (GSS), 90 to 91 (DN), 118 to 119 (DI), Asn133, and Arg200.

The protein belongs to the class I-like SAM-binding methyltransferase superfamily. Cx-SAM synthase family. As to quaternary structure, homodimer.

The catalysed reaction is prephenate + S-adenosyl-L-methionine = carboxy-S-adenosyl-L-methionine + 3-phenylpyruvate + H2O. Its function is as follows. Catalyzes the conversion of S-adenosyl-L-methionine (SAM) to carboxy-S-adenosyl-L-methionine (Cx-SAM). The polypeptide is Carboxy-S-adenosyl-L-methionine synthase (Shewanella denitrificans (strain OS217 / ATCC BAA-1090 / DSM 15013)).